Here is a 213-residue protein sequence, read N- to C-terminus: NADH dehydrogenase [ubiquinone] iron-sulfur protein 7, mitochondrial (213 aa).

A mitochondrion-targeting transit peptide spans Met-1 to Leu-31. Residues Ser-30–Ser-42 are compositionally biased toward low complexity. The disordered stretch occupies residues Ser-30–Thr-52. [4Fe-4S] cluster is bound by residues Cys-88, Cys-89, Cys-153, and Cys-183.

The protein belongs to the complex I 20 kDa subunit family. As to quaternary structure, complex I is composed of about 45 different subunits. This is a component of the iron-sulfur (IP) fragment of the enzyme. [4Fe-4S] cluster is required as a cofactor.

Its subcellular location is the mitochondrion. The catalysed reaction is a ubiquinone + NADH + 5 H(+)(in) = a ubiquinol + NAD(+) + 4 H(+)(out). Functionally, core subunit of the mitochondrial membrane respiratory chain NADH dehydrogenase (Complex I) that is believed to belong to the minimal assembly required for catalysis. Complex I functions in the transfer of electrons from NADH to the respiratory chain. The immediate electron acceptor for the enzyme is believed to be ubiquinone. The sequence is that of NADH dehydrogenase [ubiquinone] iron-sulfur protein 7, mitochondrial from Solanum tuberosum (Potato).